The chain runs to 263 residues: Glutamate racemase (263 aa).

Substrate is bound by residues 12–13 and 44–45; these read DS and YG. Catalysis depends on cysteine 75, which acts as the Proton donor/acceptor. 76-77 contributes to the substrate binding site; it reads NT. Cysteine 186 functions as the Proton donor/acceptor in the catalytic mechanism. Position 187–188 (187–188) interacts with substrate; it reads TH.

Belongs to the aspartate/glutamate racemases family.

It catalyses the reaction L-glutamate = D-glutamate. Its pathway is cell wall biogenesis; peptidoglycan biosynthesis. Functionally, provides the (R)-glutamate required for cell wall biosynthesis. In Ectopseudomonas mendocina (strain ymp) (Pseudomonas mendocina), this protein is Glutamate racemase.